The primary structure comprises 154 residues: Large ribosomal subunit protein uL15 (154 aa).

Residues 1–54 (MKLHDLTPAPGSRKPKKRVGRGPGGTDKTAGRGHKGQKSRSGAGKGPFFEGGRS) form a disordered region.

The protein belongs to the universal ribosomal protein uL15 family. In terms of assembly, part of the 50S ribosomal subunit.

Binds to the 23S rRNA. This chain is Large ribosomal subunit protein uL15, found in Deinococcus geothermalis (strain DSM 11300 / CIP 105573 / AG-3a).